Consider the following 144-residue polypeptide: Eukaryotic translation initiation factor 1A, X-chromosomal (144 aa).

Positions 1 to 15 (MPKNKGKGGKNRRRG) are enriched in basic residues. Disordered stretches follow at residues 1 to 26 (MPKN…KREL) and 114 to 144 (KINE…IDDI). Over residues 16 to 26 (KNENESEKREL) the composition is skewed to basic and acidic residues. The S1-like domain occupies 22–96 (EKRELVFKED…NKADVILKYN (75 aa)). Acidic residues predominate over residues 124 to 144 (GDDDEIQFDDIGDDDEDIDDI).

Belongs to the eIF-1A family. As to quaternary structure, component of the 43S pre-initiation complex (43S PIC), which is composed of the 40S ribosomal subunit, EIF1, eIF1A (EIF1AX), eIF3 complex, EIF5 and eIF2-GTP-initiator tRNA complex (eIF2 ternary complex). Interacts with EIF5; this interaction contributes to the maintenance of EIF1 within the open 43S PIC. Interacts through its C-terminal domain (CTD) with the CTD of EIF5B; from the location of the start codon by the 43S complex until the formation of the 80S complex. In terms of assembly, (Microbial infection) Interacts with human respiratory syncytial virus (HRSV) nucleoprotein; this interaction recruits EIF1AX to the viral replication complex to facilitate viral genomic RNA synthesis and virus production.

It localises to the cytoplasm. Its function is as follows. Component of the 43S pre-initiation complex (43S PIC), which binds to the mRNA cap-proximal region, scans mRNA 5'-untranslated region, and locates the initiation codon. This protein enhances formation of the cap-proximal complex. Together with EIF1, facilitates scanning, start codon recognition, promotion of the assembly of 48S complex at the initiation codon (43S PIC becomes 48S PIC after the start codon is reached), and dissociation of aberrant complexes. After start codon location, together with EIF5B orients the initiator methionine-tRNA in a conformation that allows 60S ribosomal subunit joining to form the 80S initiation complex. Is released after 80S initiation complex formation, just after GTP hydrolysis by EIF5B, and before release of EIF5B. Its globular part is located in the A site of the 40S ribosomal subunit. Its interaction with EIF5 during scanning contribute to the maintenance of EIF1 within the open 43S PIC. In contrast to yeast orthologs, does not bind EIF1. The sequence is that of Eukaryotic translation initiation factor 1A, X-chromosomal (EIF1AX) from Homo sapiens (Human).